The chain runs to 409 residues: N-acetylglucosamine-6-phosphate deacetylase (409 aa).

Glu-143 contacts a divalent metal cation. A substrate-binding site is contributed by 154-155 (AH). A divalent metal cation-binding residues include His-211 and His-232. Residues 235-236 (NA), Arg-243, and 269-272 (DGIH) each bind substrate. Asp-294 serves as the catalytic Proton donor/acceptor. 328-330 (LSG) lines the substrate pocket.

Belongs to the metallo-dependent hydrolases superfamily. NagA family. It depends on a divalent metal cation as a cofactor.

It carries out the reaction N-acetyl-D-glucosamine 6-phosphate + H2O = D-glucosamine 6-phosphate + acetate. The protein operates within amino-sugar metabolism; N-acetylneuraminate degradation. Its function is as follows. Hydrolyzes the N-glycolyl group from N-glycolylglucosamine 6-phosphate (GlcNGc-6-P) in the N-glycolylneuraminic acid (Neu5Gc) degradation pathway. This Bos taurus (Bovine) protein is N-acetylglucosamine-6-phosphate deacetylase (AMDHD2).